A 453-amino-acid polypeptide reads, in one-letter code: tRNA(Ile)-lysidine synthase (453 aa).

27–32 (SGGSDS) lines the ATP pocket.

The protein belongs to the tRNA(Ile)-lysidine synthase family.

The protein resides in the cytoplasm. It catalyses the reaction cytidine(34) in tRNA(Ile2) + L-lysine + ATP = lysidine(34) in tRNA(Ile2) + AMP + diphosphate + H(+). In terms of biological role, ligates lysine onto the cytidine present at position 34 of the AUA codon-specific tRNA(Ile) that contains the anticodon CAU, in an ATP-dependent manner. Cytidine is converted to lysidine, thus changing the amino acid specificity of the tRNA from methionine to isoleucine. In Rhizobium meliloti (strain 1021) (Ensifer meliloti), this protein is tRNA(Ile)-lysidine synthase.